A 204-amino-acid chain; its full sequence is Putative 3-methyladenine DNA glycosylase (204 aa).

It belongs to the DNA glycosylase MPG family.

In Bacillus mycoides (strain KBAB4) (Bacillus weihenstephanensis), this protein is Putative 3-methyladenine DNA glycosylase.